The chain runs to 95 residues: Integration host factor subunit beta (95 aa).

It belongs to the bacterial histone-like protein family. Heterodimer of an alpha and a beta chain.

In terms of biological role, this protein is one of the two subunits of integration host factor, a specific DNA-binding protein that functions in genetic recombination as well as in transcriptional and translational control. The chain is Integration host factor subunit beta from Shewanella sp. (strain ANA-3).